The following is a 539-amino-acid chain: MHRKSLRRASATVPSAPYRKQIISNAHNKPSLFSKIKTFFTQKDSARVSPRNNVANKQPRNESFNRRISSMPGGYFHSEISPDSTVNRSVVVSAVGEARNDIENKEEEYDETHETNISNAKLANFFSKKGNEPLSEIEIEGVMSLLQKSSKSMITSEGEQKSAEGNNIDQSLILKESGSTPISISNAPTFNPKYDTSNASMNTTLGSIGSRKYSFNYSSLPSPYKTTVYRYSAAKKIPDTYTANTSAQSIASAKSVRSGVSKSAPSKKISNTAAALVSLLDENDSKKNNAASELANPYSSYVSQIRKHKRVSPNAAPRQEISEEETTVKPLFQNVPEQGEEPMKQLNATKISPSAPSKDSFTKYKPARSSSLRSNVVVAETSPEKKDGGDKPPSSAFNFSFNTSRNVEPTENAYKSENAPSASSKEFNFTNLQAKPLVGKPKTELTKGDSTPVQPDLSVTPQKSSSKGFVFNSVQKKSRSNLSQENDNEGKHISASIDNDFSEEKAEEFDFNVPVVSKQLGNGLVDENKVEAFKSLYTF.

Phosphoserine is present on residues serine 10, serine 49, serine 81, and serine 89. Residues 44–80 (DSARVSPRNNVANKQPRNESFNRRISSMPGGYFHSEI) are disordered. A coiled-coil region spans residues 91–118 (VVSAVGEARNDIENKEEEYDETHETNIS). Serine 162, serine 171, serine 214, and serine 222 each carry phosphoserine. Composition is skewed to polar residues over residues 242–252 (TANTSAQSIAS) and 258–267 (SGVSKSAPSK). Disordered regions lie at residues 242–267 (TANT…APSK), 305–329 (IRKH…TTVK), and 347–493 (NATK…GKHI). Polar residues predominate over residues 347 to 359 (NATKISPSAPSKD). Phosphoserine is present on residues serine 352, serine 360, serine 374, and serine 382. Composition is skewed to polar residues over residues 395 to 433 (SAFN…TNLQ) and 448 to 485 (GDST…LSQE). FXF repeat units follow at residues 399 to 401 (FSF) and 427 to 429 (FNF). Threonine 460 bears the Phosphothreonine mark. An FXF 3 repeat occupies 469 to 471 (FVF). Phosphoserine occurs at positions 480 and 483. An FXF 4 repeat occupies 509–511 (FDF).

In terms of assembly, component of the nuclear pore complex (NPC). NPC constitutes the exclusive means of nucleocytoplasmic transport. NPCs allow the passive diffusion of ions and small molecules and the active, nuclear transport receptor-mediated bidirectional transport of macromolecules such as proteins, RNAs, ribonucleoparticles (RNPs), and ribosomal subunits across the nuclear envelope. Due to its 8-fold rotational symmetry, all subunits are present with 8 copies or multiples thereof. Binds to NUP1 and NUP2 forming the nuclear basket and the distal ring. The interaction with NUP2 is GSP1-GTP-dependent. Interacts through its FG repeats with karyopherins, such as KAP123 and KAP95-SRP1 (KAP60). Also interacts with GSP1-GTP and SRM1 (PRP20), where NUP60 reduces SRM1 activity, thus inhibiting GSP1 guanine nucleotide dissociation. In terms of processing, phosphorylated by CDC28.

The protein resides in the nucleus. It localises to the nuclear pore complex. It is found in the nucleus membrane. Functions as a component of the nuclear pore complex (NPC). NPC components, collectively referred to as nucleoporins (NUPs), can play the role of both NPC structural components and of docking or interaction partners for transiently associated nuclear transport factors. Active directional transport is assured by both, a Phe-Gly (FG) repeat affinity gradient for these transport factors across the NPC and a transport cofactor concentration gradient across the nuclear envelope (GSP1 and GSP2 GTPases associated predominantly with GTP in the nucleus, with GDP in the cytoplasm). This is Nucleoporin NUP60 (NUP60) from Saccharomyces cerevisiae (strain ATCC 204508 / S288c) (Baker's yeast).